Reading from the N-terminus, the 376-residue chain is NAD(P)H-quinone oxidoreductase subunit 1, chloroplastic (376 aa).

Transmembrane regions (helical) follow at residues 27 to 47, 65 to 85, 97 to 117, 130 to 150, 166 to 186, 251 to 271, 272 to 292, 310 to 330, and 353 to 373; these read LISI…GVLV, PEYA…KLLI, WLFS…YLVV, LGIF…LIAG, AAQS…ISLL, GIKF…SSLF, AVVL…IFFI, LIIP…FIFF, and FLLP…LTLF.

It belongs to the complex I subunit 1 family. In terms of assembly, NDH is composed of at least 16 different subunits, 5 of which are encoded in the nucleus.

The protein resides in the plastid. The protein localises to the chloroplast thylakoid membrane. It carries out the reaction a plastoquinone + NADH + (n+1) H(+)(in) = a plastoquinol + NAD(+) + n H(+)(out). The enzyme catalyses a plastoquinone + NADPH + (n+1) H(+)(in) = a plastoquinol + NADP(+) + n H(+)(out). Functionally, NDH shuttles electrons from NAD(P)H:plastoquinone, via FMN and iron-sulfur (Fe-S) centers, to quinones in the photosynthetic chain and possibly in a chloroplast respiratory chain. The immediate electron acceptor for the enzyme in this species is believed to be plastoquinone. Couples the redox reaction to proton translocation, and thus conserves the redox energy in a proton gradient. The protein is NAD(P)H-quinone oxidoreductase subunit 1, chloroplastic of Chara vulgaris (Common stonewort).